A 301-amino-acid polypeptide reads, in one-letter code: ATP synthase gamma chain (301 aa).

It belongs to the ATPase gamma chain family. F-type ATPases have 2 components, CF(1) - the catalytic core - and CF(0) - the membrane proton channel. CF(1) has five subunits: alpha(3), beta(3), gamma(1), delta(1), epsilon(1). CF(0) has three main subunits: a, b and c.

The protein localises to the cell inner membrane. In terms of biological role, produces ATP from ADP in the presence of a proton gradient across the membrane. The gamma chain is believed to be important in regulating ATPase activity and the flow of protons through the CF(0) complex. This chain is ATP synthase gamma chain, found in Bordetella avium (strain 197N).